The following is a 718-amino-acid chain: Adhesin-like cell surface protein MAD1 (718 aa).

Positions 1 to 19 (MKGAIQFLGALAAVQAVSA) are cleaved as a signal peptide. 9 repeat units span residues 217 to 243 (PCTE…TEPA), 244 to 265 (PCTE…TEPA), 266 to 282 (PCTE…TEPA), 283 to 309 (PCTE…TEPA), 310 to 336 (PCTE…TEPA), 337 to 358 (PCTE…TEPA), 359 to 382 (PCTE…TDEA), 383 to 402 (PCTD…TDEA), and 403 to 420 (PCTE…AVPT). Residues 452 to 472 (TSIPYETPSPSETETLPPSGT) are disordered. A CFEM domain is found at 462-575 (SETETLPPSG…VTLPPVTTGA (114 aa)). 3 disulfide bridges follow: Cys494/Cys526, Cys504/Cys512, and Cys514/Cys548. Asp509 contacts heme. The GPI-anchor amidated glycine moiety is linked to residue Gly693. The propeptide at 694 to 718 (AASSFKAFSTVMLAGVIGLTALIMA) is removed in mature form.

The protein belongs to the RBT5 family. The GPI-anchor is attached to the protein in the endoplasmic reticulum and serves to target the protein to the cell surface. There, the glucosamine-inositol phospholipid moiety is cleaved off and the GPI-modified mannoprotein is covalently attached via its lipidless GPI glycan remnant to the 1,6-beta-glucan of the outer cell wall layer.

The protein resides in the secreted. The protein localises to the cell wall. It localises to the cell membrane. Its function is as follows. Cell surface adhesion protein that plays a key role in switching between the saprophytic lifestyle and the predacious lifestyle (nematode trapping). Likely functions to prevent energy-consuming trap formation in the absence of nematodes, and keeps the fungus in the saprophytic life style. May influence the induction signal of trap formation by limiting the porosity of the cell wall and thus affecting its permeability of nitrogen source. The sequence is that of Adhesin-like cell surface protein MAD1 from Arthrobotrys oligospora (strain ATCC 24927 / CBS 115.81 / DSM 1491) (Nematode-trapping fungus).